Reading from the N-terminus, the 20-residue chain is Short cationic peptide-4d (20 aa).

Glu-20 bears the Glutamic acid 1-amide mark.

As to expression, expressed by the venom gland.

The protein resides in the secreted. In Cupiennius salei (American wandering spider), this protein is Short cationic peptide-4d.